The following is a 338-amino-acid chain: 5-dehydro-2-deoxygluconokinase (338 aa).

The protein belongs to the carbohydrate kinase PfkB family.

It carries out the reaction 5-dehydro-2-deoxy-D-gluconate + ATP = 6-phospho-5-dehydro-2-deoxy-D-gluconate + ADP + H(+). Its pathway is polyol metabolism; myo-inositol degradation into acetyl-CoA; acetyl-CoA from myo-inositol: step 5/7. Functionally, catalyzes the phosphorylation of 5-dehydro-2-deoxy-D-gluconate (2-deoxy-5-keto-D-gluconate or DKG) to 6-phospho-5-dehydro-2-deoxy-D-gluconate (DKGP). The protein is 5-dehydro-2-deoxygluconokinase of Mesomycoplasma hyopneumoniae (strain J / ATCC 25934 / NCTC 10110) (Mycoplasma hyopneumoniae).